The sequence spans 100 residues: Defensin-like protein 316 (100 aa).

Residues 1–18 form the signal peptide; that stretch reads MASHIICYIFCIIKLSCA. Disulfide bonds link Cys-21–Cys-84, Cys-43–Cys-64, and Cys-53–Cys-76.

Belongs to the DEFL family.

It is found in the secreted. The protein is Defensin-like protein 316 of Arabidopsis thaliana (Mouse-ear cress).